The following is a 355-amino-acid chain: Putative cyclin-A3-1 (355 aa).

This sequence belongs to the cyclin family. Cyclin AB subfamily.

This is Putative cyclin-A3-1 (CYCA3-1) from Arabidopsis thaliana (Mouse-ear cress).